The primary structure comprises 141 residues: Nucleoside diphosphate kinase (141 aa).

The ATP site is built by Lys11, Phe59, Arg87, Thr93, Arg104, and Asn114. His117 acts as the Pros-phosphohistidine intermediate in catalysis.

Belongs to the NDK family. Homotetramer. It depends on Mg(2+) as a cofactor.

Its subcellular location is the cytoplasm. The catalysed reaction is a 2'-deoxyribonucleoside 5'-diphosphate + ATP = a 2'-deoxyribonucleoside 5'-triphosphate + ADP. The enzyme catalyses a ribonucleoside 5'-diphosphate + ATP = a ribonucleoside 5'-triphosphate + ADP. Its function is as follows. Major role in the synthesis of nucleoside triphosphates other than ATP. The ATP gamma phosphate is transferred to the NDP beta phosphate via a ping-pong mechanism, using a phosphorylated active-site intermediate. This chain is Nucleoside diphosphate kinase, found in Acidovorax ebreus (strain TPSY) (Diaphorobacter sp. (strain TPSY)).